Reading from the N-terminus, the 103-residue chain is Cell division protein FtsB (103 aa).

Over 1 to 3 (MGK) the chain is Cytoplasmic. Residues 4–21 (LTLLLLALLVWLQYSLWF) form a helical membrane-spanning segment. Topologically, residues 22-103 (GKNGIHDYSR…RAQTAGQNNR (82 aa)) are periplasmic. Residues 33–62 (NDDVVAQQATNAKLKARNDQLFAEIDDLNG) are a coiled coil.

Belongs to the FtsB family. In terms of assembly, part of a complex composed of FtsB, FtsL and FtsQ.

The protein resides in the cell inner membrane. Essential cell division protein. May link together the upstream cell division proteins, which are predominantly cytoplasmic, with the downstream cell division proteins, which are predominantly periplasmic. The protein is Cell division protein FtsB of Salmonella arizonae (strain ATCC BAA-731 / CDC346-86 / RSK2980).